The following is a 160-amino-acid chain: Transcription antitermination protein NusB (160 aa).

It belongs to the NusB family.

Its function is as follows. Involved in transcription antitermination. Required for transcription of ribosomal RNA (rRNA) genes. Binds specifically to the boxA antiterminator sequence of the ribosomal RNA (rrn) operons. This Maricaulis maris (strain MCS10) (Caulobacter maris) protein is Transcription antitermination protein NusB.